Reading from the N-terminus, the 370-residue chain is MKTKLILLYGGKSAEHEVSLQTAFSVINALDLEKFEAAPIYITNEGEWIQGPLLSGKLDFVEQLRFSATDTIKLATTESEKSEGEAISPAVLEADGQETVVFPLLHGPNGEDGTVQGLFEVLNIPYVGNGVLASSAAMDKIVMKKIFADAGIPQVPAVAVRLIDWKNYQAEMVAEMEEVLTYPVFVKPANLGSSVGISKATNKKELADAMTEAFLYDRRVVVEQGVVAREIEMGVLGNDTPVCSVPGEILPEGAVATFYDYKAKYQDNNTALIIPTEVDPEILEQMKEYAVQAFLGLDASGLVRADFFLTEDNQLFLNEVNTMPGFTPYSMYPLLWQETGLPYGALIERLVDLAKERHAAKNALKYKLED.

The region spanning 144–352 (KKIFADAGIP…YGALIERLVD (209 aa)) is the ATP-grasp domain. 177–232 (EEVLTYPVFVKPANLGSSVGISKATNKKELADAMTEAFLYDRRVVVEQGVVAREIE) contributes to the ATP binding site. Mg(2+) contacts are provided by D306, E319, and N321.

Belongs to the D-alanine--D-alanine ligase family. Mg(2+) serves as cofactor. Mn(2+) is required as a cofactor.

The protein resides in the cytoplasm. The enzyme catalyses 2 D-alanine + ATP = D-alanyl-D-alanine + ADP + phosphate + H(+). Its pathway is cell wall biogenesis; peptidoglycan biosynthesis. Cell wall formation. This Listeria monocytogenes serotype 4b (strain F2365) protein is D-alanine--D-alanine ligase.